Consider the following 191-residue polypeptide: Potassium-transporting ATPase KdpC subunit (191 aa).

Residues 8–28 traverse the membrane as a helical segment; it reads LFLFLLLLLVTGLAYPLLTTV.

The protein belongs to the KdpC family. In terms of assembly, the system is composed of three essential subunits: KdpA, KdpB and KdpC.

The protein resides in the cell inner membrane. Part of the high-affinity ATP-driven potassium transport (or Kdp) system, which catalyzes the hydrolysis of ATP coupled with the electrogenic transport of potassium into the cytoplasm. This subunit acts as a catalytic chaperone that increases the ATP-binding affinity of the ATP-hydrolyzing subunit KdpB by the formation of a transient KdpB/KdpC/ATP ternary complex. The sequence is that of Potassium-transporting ATPase KdpC subunit from Pectobacterium atrosepticum (strain SCRI 1043 / ATCC BAA-672) (Erwinia carotovora subsp. atroseptica).